Reading from the N-terminus, the 272-residue chain is HMP-PP phosphatase (272 aa).

Asp-8 (nucleophile) is an active-site residue. Residues Asp-8, Asp-10, and Asp-212 each contribute to the Mg(2+) site.

This sequence belongs to the HAD-like hydrolase superfamily. Cof family. Requires Mg(2+) as cofactor.

The catalysed reaction is 4-amino-2-methyl-5-(diphosphooxymethyl)pyrimidine + H2O = 4-amino-2-methyl-5-(phosphooxymethyl)pyrimidine + phosphate + H(+). Its function is as follows. Catalyzes the hydrolysis of 4-amino-2-methyl-5-hydroxymethylpyrimidine pyrophosphate (HMP-PP) to 4-amino-2-methyl-5-hydroxymethylpyrimidine phosphate (HMP-P). The chain is HMP-PP phosphatase from Escherichia coli (strain UTI89 / UPEC).